The following is a 202-amino-acid chain: Apolipoprotein R (202 aa).

The signal sequence occupies residues methionine 1–cysteine 28. Sushi domains lie at glycine 29–alanine 87 and leucine 88–tryptophan 145. 4 disulfide bridges follow: cysteine 30–cysteine 73, cysteine 59–cysteine 85, cysteine 89–cysteine 130, and cysteine 116–cysteine 143.

As to quaternary structure, forms high molecular weight disulfide-linked complexes. As to expression, plasma. Found on very low-density lipoprotein (VLDL), on chylomicrons, and in the D &gt; 1.21 g/ml fraction of pig plasma. Found in liver, spleen, lung, bone marrow and lymph node.

The protein localises to the secreted. Its function is as follows. May be a lipoprotein-borne regulator of either the coagulation or the complement cascades. The chain is Apolipoprotein R (APOR) from Sus scrofa (Pig).